A 360-amino-acid polypeptide reads, in one-letter code: Photosystem II protein D1 1 (360 aa).

The next 3 helical transmembrane spans lie at 29 to 46, 118 to 133, and 142 to 156; these read YVGW…TATT, HFLI…EWEL, and WICV…AATA. Position 118 (His-118) interacts with chlorophyll a. Tyr-126 provides a ligand contact to pheophytin a. Asp-170 and Glu-189 together coordinate [CaMn4O5] cluster. The chain crosses the membrane as a helical span at residues 197 to 218; sequence FHMLGVAGVFGGSLFSAMHGSL. His-198 serves as a coordination point for chlorophyll a. A quinone-binding positions include His-215 and 264-265; that span reads SF. Position 215 (His-215) interacts with Fe cation. His-272 is a Fe cation binding site. A helical membrane pass occupies residues 274-288; the sequence is FLGAWPVVGIWFTAL. [CaMn4O5] cluster contacts are provided by His-332, Glu-333, Asp-342, and Ala-344. Positions 345 to 360 are excised as a propeptide; sequence AGEQAPVALQAPAING.

The protein belongs to the reaction center PufL/M/PsbA/D family. In terms of assembly, PSII is composed of 1 copy each of membrane proteins PsbA, PsbB, PsbC, PsbD, PsbE, PsbF, PsbH, PsbI, PsbJ, PsbK, PsbL, PsbM, PsbT, PsbX, PsbY, PsbZ, Psb30/Ycf12, peripheral proteins PsbO, CyanoQ (PsbQ), PsbU, PsbV and a large number of cofactors. It forms dimeric complexes. The cofactor is The D1/D2 heterodimer binds P680, chlorophylls that are the primary electron donor of PSII, and subsequent electron acceptors. It shares a non-heme iron and each subunit binds pheophytin, quinone, additional chlorophylls, carotenoids and lipids. D1 provides most of the ligands for the Mn4-Ca-O5 cluster of the oxygen-evolving complex (OEC). There is also a Cl(-1) ion associated with D1 and D2, which is required for oxygen evolution. The PSII complex binds additional chlorophylls, carotenoids and specific lipids.. Tyr-161 forms a radical intermediate that is referred to as redox-active TyrZ, YZ or Y-Z. In terms of processing, C-terminally processed by CtpA; processing is essential to allow assembly of the oxygen-evolving complex and thus photosynthetic growth.

It is found in the cellular thylakoid membrane. It carries out the reaction 2 a plastoquinone + 4 hnu + 2 H2O = 2 a plastoquinol + O2. In terms of biological role, photosystem II (PSII) is a light-driven water:plastoquinone oxidoreductase that uses light energy to abstract electrons from H(2)O, generating O(2) and a proton gradient subsequently used for ATP formation. It consists of a core antenna complex that captures photons, and an electron transfer chain that converts photonic excitation into a charge separation. The D1/D2 (PsbA/PsbD) reaction center heterodimer binds P680, the primary electron donor of PSII as well as several subsequent electron acceptors. The chain is Photosystem II protein D1 1 from Picosynechococcus sp. (strain ATCC 27264 / PCC 7002 / PR-6) (Agmenellum quadruplicatum).